The primary structure comprises 286 residues: uncharacterized protein (286 aa).

It belongs to the chlamydial CPn_0389/CT_041/TC_0311 family.

This is an uncharacterized protein from Chlamydia muridarum (strain MoPn / Nigg).